A 586-amino-acid polypeptide reads, in one-letter code: uncharacterized protein (586 aa).

2 coiled-coil regions span residues 183-293 and 331-400; these read THTE…ELEN and FKDK…DKKN.

This is an uncharacterized protein from Bacillus subtilis (strain 168).